The primary structure comprises 1142 residues: Fibronectin type-III domain-containing protein 3A (1142 aa).

The disordered stretch occupies residues 104-191 (YGDVDAHSTH…KSGKGKGGTQ (88 aa)). The span at 107–145 (VDAHSTHGRSNFRDERSSKTYERLQKKLKDRQGTQKDKM) shows a compositional bias: basic and acidic residues. A compositionally biased stretch (low complexity) spans 146–158 (SSPPSSPQKCPSP). Residues serine 147, serine 151, and serine 157 each carry the phosphoserine modification. Fibronectin type-III domains follow at residues 212–313 (NIVK…TLSC), 317–409 (IPNP…TSGC), 413–506 (MPAS…TCPD), 510–604 (IPVK…TPAV), 608–701 (PCLP…TAPG), 705–795 (QCKP…TPPS), 805–894 (EISD…TKPL), 895–989 (PPDP…TPKS), and 990–1095 (VPAA…TEPP). Lysine 328 carries the N6-acetyllysine modification. The helical transmembrane segment at 1121-1141 (NLVLFAFFSILIAFIIQYFVI) threads the bilayer.

The protein belongs to the FNDC3 family.

It is found in the golgi apparatus membrane. Mediates spermatid-Sertoli adhesion during spermatogenesis. This is Fibronectin type-III domain-containing protein 3A (FNDC3A) from Pongo abelii (Sumatran orangutan).